A 748-amino-acid polypeptide reads, in one-letter code: Phytochrome-like protein Cph1 (748 aa).

A PAS domain is found at 19–86 (AIHTAHLIQP…IQSRLTAGQI (68 aa)). Positions 87–510 (SSLNPSKLWA…KKAIVNLILR (424 aa)) are chromophore binding domain. The 169-residue stretch at 152 to 320 (NLRDFYDVIV…VVFSNISAQE (169 aa)) folds into the GAF domain. A tetrapyrrole is bound at residue Cys259. One can recognise a Histidine kinase domain in the interval 535–748 (IASHDLQEPL…TFYFSIPIGN (214 aa)). The residue at position 538 (His538) is a Phosphohistidine; by autocatalysis.

The protein in the N-terminal section; belongs to the phytochrome family. As to quaternary structure, homodimer. In terms of processing, contains one covalently linked tetrapyrrole chromophore.

It catalyses the reaction ATP + protein L-histidine = ADP + protein N-phospho-L-histidine.. Regulatory photoreceptor which exists in two forms that are reversibly interconvertible by light: the R form that absorbs maximally in the red region of the spectrum and the FR form that absorbs maximally in the far-red region. Also has a slight blue shift for the far-red maximum. Forms a two-component system with the Rrcp1 response regulator. In Synechocystis sp. (strain ATCC 27184 / PCC 6803 / Kazusa), this protein is Phytochrome-like protein Cph1 (cph1).